A 400-amino-acid chain; its full sequence is Elongation factor Tu (400 aa).

The 199-residue stretch at 10 to 208 folds into the tr-type G domain; it reads KPHVNVGTIG…AMDNYIPDPQ (199 aa). The G1 stretch occupies residues 19–26; it reads GHIDHGKS. Residue 19-26 participates in GTP binding; it reads GHIDHGKS. Residue S26 participates in Mg(2+) binding. Residues 60-64 are G2; sequence GITIN. Positions 81 to 84 are G3; the sequence is DCPG. GTP is bound by residues 81–85 and 136–139; these read DCPGH and NKTD. Residues 136–139 are G4; that stretch reads NKTD. The interval 174 to 176 is G5; it reads SAL.

This sequence belongs to the TRAFAC class translation factor GTPase superfamily. Classic translation factor GTPase family. EF-Tu/EF-1A subfamily. Monomer.

Its subcellular location is the cytoplasm. It catalyses the reaction GTP + H2O = GDP + phosphate + H(+). In terms of biological role, GTP hydrolase that promotes the GTP-dependent binding of aminoacyl-tRNA to the A-site of ribosomes during protein biosynthesis. This is Elongation factor Tu from Thermotoga maritima (strain ATCC 43589 / DSM 3109 / JCM 10099 / NBRC 100826 / MSB8).